The chain runs to 300 residues: NAD kinase (300 aa).

The Proton acceptor role is filled by aspartate 75. NAD(+) is bound by residues 75–76 (DG), 149–150 (ND), arginine 177, aspartate 179, 190–195 (TAYALS), alanine 214, and glutamine 248.

It belongs to the NAD kinase family. A divalent metal cation serves as cofactor.

The protein localises to the cytoplasm. The enzyme catalyses NAD(+) + ATP = ADP + NADP(+) + H(+). In terms of biological role, involved in the regulation of the intracellular balance of NAD and NADP, and is a key enzyme in the biosynthesis of NADP. Catalyzes specifically the phosphorylation on 2'-hydroxyl of the adenosine moiety of NAD to yield NADP. The chain is NAD kinase from Burkholderia vietnamiensis (strain G4 / LMG 22486) (Burkholderia cepacia (strain R1808)).